The following is a 338-amino-acid chain: Malate dehydrogenase, mitochondrial (338 aa).

Residues 1 to 24 constitute a mitochondrion transit peptide; that stretch reads MLSALARPVGAALRRSFSTSAQNN. NAD(+) contacts are provided by residues 31 to 37 and Asp-57; that span reads GASGGIG. O-linked (GlcNAc) serine glycosylation occurs at Ser-33. Residues Lys-78 and Lys-91 each carry the N6-acetyllysine; alternate modification. Residues Lys-78 and Lys-91 each carry the N6-succinyllysine; alternate modification. 2 residues coordinate substrate: Arg-104 and Arg-110. Residues Asn-117 and 140–142 each bind NAD(+); that span reads ISN. Asn-142 contacts substrate. The residue at position 165 (Lys-165) is an N6-acetyllysine. Arg-176 is a substrate binding site. Residue Lys-185 is modified to N6-acetyllysine; alternate. Lys-185 is subject to N6-succinyllysine; alternate. His-200 (proton acceptor) is an active-site residue. Lys-203 carries the post-translational modification N6-succinyllysine. N6-acetyllysine; alternate occurs at positions 215 and 239. An N6-succinyllysine; alternate mark is found at Lys-215 and Lys-239. Lys-239 bears the N6-malonyllysine; alternate mark. Ser-246 carries the post-translational modification Phosphoserine. Met-251 is a binding site for NAD(+). Residue Lys-269 is modified to N6-succinyllysine. Residues Lys-296, Lys-301, Lys-307, Lys-314, and Lys-324 each carry the N6-acetyllysine; alternate modification. N6-succinyllysine; alternate is present on residues Lys-296, Lys-301, Lys-307, Lys-314, and Lys-324. The residue at position 307 (Lys-307) is an N6-malonyllysine; alternate. Ser-326 is modified (phosphoserine). An N6-acetyllysine; alternate mark is found at Lys-328, Lys-329, and Lys-335. Lys-328 carries the post-translational modification N6-succinyllysine; alternate. Lys-329 carries the post-translational modification N6-malonyllysine; alternate. Lys-335 carries the N6-succinyllysine; alternate modification.

The protein belongs to the LDH/MDH superfamily. MDH type 1 family. In terms of assembly, homodimer. Post-translationally, acetylation is enhanced after treatment either with trichostin A (TCA) or with nicotinamide (NAM) with the appearance of tri- and tetraacetylations. Glucose also increases acetylation. As to expression, expressed in flagella of epididymal sperm.

It is found in the mitochondrion matrix. The enzyme catalyses (S)-malate + NAD(+) = oxaloacetate + NADH + H(+). Enzyme activity is enhanced by acetylation. In Rattus norvegicus (Rat), this protein is Malate dehydrogenase, mitochondrial (Mdh2).